The following is a 444-amino-acid chain: Sprouty-related, EVH1 domain-containing protein 1 (444 aa).

N-acetylserine is present on Ser2. The 118-residue stretch at 6–123 folds into the WH1 domain; the sequence is ATSDNDNSYA…RGIRRAIEDI (118 aa). An N6-methyllysine modification is found at Lys225. A KBD domain is found at 234 to 286; the sequence is SIRHVSFQDEDEIVRINPRDILIRRYADYRHPDMWKNDLERDDTDSSVPFSKQ. Ser239 is subject to Phosphoserine. Residues 268 to 287 are disordered; that stretch reads WKNDLERDDTDSSVPFSKQD. Ser309 carries the post-translational modification Phosphoserine. A required for interaction with TESK1 region spans residues 333–444; it reads SRCVYCQERF…CCGGKHKAAG (112 aa). In terms of domain architecture, SPR spans 334–442; it reads RCVYCQERFN…CGCCGGKHKA (109 aa).

In terms of assembly, homodimer and heterodimer. Able to interact with SPRED2 to form heterodimers. Interacts (via C-terminus) with TAOK1/MARKK (via C-terminus); the interaction does not affect TAOK1 kinase activity. Interacts (via C-terminus) with TESK1 (via C-terminus); the interaction inhibits TESK1 kinase activity. Interacts with CAV1. Interacts with RAS. Interacts with palmitoyltransferase ZDHHC17/HIP14; the interaction leads to palmitoylation of SPRED1. Palmitoylated by ZDHHC17/HIP14. In terms of processing, ubiquitinated. Post-translationally, phosphorylated on tyrosine. In terms of tissue distribution, expressed in brain. Weakly expressed in lung, heart, liver, kidney, intestine, spleen, testis, thymus, colon and ovary. Also expressed in embryonic tissues such as heart, lung, liver and brain. Highly expressed in IL3-dependent hematopoietic cell lines (Ba/F3 and MC/9) and bone marrow-derived mast cells (BMMC).

The protein localises to the cell membrane. The protein resides in the membrane. It localises to the caveola. It is found in the nucleus. Functionally, tyrosine kinase substrate that inhibits growth-factor-mediated activation of MAP kinase. Negatively regulates hematopoiesis of bone marrow. Inhibits fibroblast growth factor (FGF)-induced retinal lens fiber differentiation, probably by inhibiting FGF-mediated phosphorylation of ERK1/2. Attenuates actin stress fiber formation via inhibition of TESK1-mediated phosphorylation of cofilin. Inhibits TGFB-induced epithelial-to-mesenchymal transition in lens epithelial cells. This is Sprouty-related, EVH1 domain-containing protein 1 (Spred1) from Mus musculus (Mouse).